Reading from the N-terminus, the 379-residue chain is ATP phosphoribosyltransferase regulatory subunit (379 aa).

This sequence belongs to the class-II aminoacyl-tRNA synthetase family. HisZ subfamily. As to quaternary structure, heteromultimer composed of HisG and HisZ subunits.

It localises to the cytoplasm. The protein operates within amino-acid biosynthesis; L-histidine biosynthesis; L-histidine from 5-phospho-alpha-D-ribose 1-diphosphate: step 1/9. Functionally, required for the first step of histidine biosynthesis. May allow the feedback regulation of ATP phosphoribosyltransferase activity by histidine. The polypeptide is ATP phosphoribosyltransferase regulatory subunit (Sinorhizobium fredii (strain NBRC 101917 / NGR234)).